The primary structure comprises 1237 residues: Anion exchange protein 2 (1237 aa).

The interval 1–237 is disordered; it reads MSSAPRRPAS…SYNLQERRRI (237 aa). Residues 1-703 lie on the Cytoplasmic side of the membrane; it reads MSSAPRRPAS…SDFRDALDPQ (703 aa). Basic and acidic residues-rich tracts occupy residues 37-49 and 58-75; these read ELHRTLGVERFEE and GGEEPGRSYGEEDFEYHR. 2 stretches are compositionally biased toward basic residues: residues 76 to 85 and 94 to 110; these read QSSHHIHHPL and RRRKTPQGPGRKPRRRP. A Phosphoserine modification is found at Ser113. Over residues 122 to 133 the composition is skewed to acidic residues; the sequence is EEGEEDEEEANE. Residues 137 to 151 are compositionally biased toward low complexity; it reads ARAPTEPSPASTPSS. 3 positions are modified to phosphoserine: Ser144, Ser170, and Ser172. Residues 206–215 are compositionally biased toward gly residues; that stretch reads TAGGDNGGAS. The residue at position 239 (Ser239) is a Phosphoserine. Thr253 is modified (phosphothreonine). The residue at position 270 (Lys270) is an N6-methyllysine. The disordered stretch occupies residues 281–316; that stretch reads RRHLVRKNAKGSAQSSREGREPGPTPRSRPRAPHKP. Phosphoserine is present on Ser439. The interval 445 to 464 is disordered; the sequence is SLLGHHHGQGAESDPHVTEP. 4 helical membrane-spanning segments follow: residues 704 to 727, 733 to 770, 790 to 812, and 822 to 843; these read CVAAVIFIYFAALSPAITFGGLLG, LIGVSELIMSTALQGVIFCLLGAQPLLVIGFSGPLLVF, VWIGFWLVLLALLMVALEGSFLV, and IFAFLISLIFIYETFYKLIKIF. The tract at residues 704 to 1237 is membrane (anion exchange); the sequence is CVAAVIFIYF…DEYNEMPMPV (534 aa). The Extracellular segment spans residues 844-896; it reads QEHPLHGCSVSNSSETDSSENATWAGAGSTLGPANRSSAGQAGQGRPRGQPNT. Asn855, Asn864, and Asn878 each carry an N-linked (GlcNAc...) asparagine glycan. The chain crosses the membrane as a helical span at residues 897 to 914; sequence ALLSLVLMAGTFFIAFFL. Residues 915 to 929 are Cytoplasmic-facing; the sequence is RKFKNSRFFPGRIRR. 5 consecutive transmembrane segments (helical) span residues 930-950, 984-1006, 1032-1053, 1087-1132, and 1159-1195; these read VIGDFGVPIAILIMVLVDYSI, PFPVWMMVASLLPAILVFILIFM, LLLIVAMGGICALFGLPWLAAA, VTGL…IQFY, and MHLFTALQLLCLALLWAVMSTAASLAFPFILILTVPL. Residue Cys1169 is the site of S-palmitoyl cysteine attachment.

This sequence belongs to the anion exchanger (TC 2.A.31) family. As to expression, expressed in the ileum (at protein level).

The protein resides in the cell membrane. Its subcellular location is the apical cell membrane. It localises to the basolateral cell membrane. It catalyses the reaction hydrogencarbonate(in) + chloride(out) = hydrogencarbonate(out) + chloride(in). Sodium-independent anion exchanger which mediates the electroneutral exchange of chloride for bicarbonate ions across the cell membrane. Plays an important role in osteoclast differentiation and function. Regulates bone resorption and calpain-dependent actin cytoskeleton organization in osteoclasts via anion exchange-dependent control of pH. Essential for intracellular pH regulation in CD8(+) T-cells upon CD3 stimulation, modulating CD8(+) T-cell response. This Oryctolagus cuniculus (Rabbit) protein is Anion exchange protein 2 (SLC4A2).